Consider the following 20-residue polypeptide: Endo-1,6-beta-glucanase (20 aa).

It belongs to the glycosyl hydrolase 5 (cellulase A) family.

Its subcellular location is the secreted. The protein resides in the extracellular space. It carries out the reaction Random hydrolysis of (1-&gt;6)-linkages in (1-&gt;6)-beta-D-glucans.. Functionally, endo-1,6-beta-glucanase that has highest activity against the beta-1,6-glucan pustulan. Also active against the beta-1,6-glucan lutean. Lower activity against laminarin (beta-1,3-glucan with beta-1,6-branches). Little or no activity against gentiobiose, yeast glucan, lichenin, scleroglucan, curdlan, barley glucan, CM cellulose, HE cellulose, pachyman and pullulan. This Acremonium sp protein is Endo-1,6-beta-glucanase.